A 206-amino-acid polypeptide reads, in one-letter code: Holliday junction branch migration complex subunit RuvA (206 aa).

The segment at 1–62 (MYDYLKGLIT…EDAQVLYGFP (62 aa)) is domain I. The domain II stretch occupies residues 63–141 (NLDQRELFRK…SLLETIELPS (79 aa)). Positions 142–152 (TEDELPLFGVH) are flexible linker. Positions 153-206 (PYKHELEEAILALAALGYSEKELEKIRPLLEDNDKLETTDAYMKQALQLLLKLK) are domain III.

The protein belongs to the RuvA family. As to quaternary structure, homotetramer. Forms an RuvA(8)-RuvB(12)-Holliday junction (HJ) complex. HJ DNA is sandwiched between 2 RuvA tetramers; dsDNA enters through RuvA and exits via RuvB. An RuvB hexamer assembles on each DNA strand where it exits the tetramer. Each RuvB hexamer is contacted by two RuvA subunits (via domain III) on 2 adjacent RuvB subunits; this complex drives branch migration. In the full resolvosome a probable DNA-RuvA(4)-RuvB(12)-RuvC(2) complex forms which resolves the HJ.

The protein localises to the cytoplasm. Its function is as follows. The RuvA-RuvB-RuvC complex processes Holliday junction (HJ) DNA during genetic recombination and DNA repair, while the RuvA-RuvB complex plays an important role in the rescue of blocked DNA replication forks via replication fork reversal (RFR). RuvA specifically binds to HJ cruciform DNA, conferring on it an open structure. The RuvB hexamer acts as an ATP-dependent pump, pulling dsDNA into and through the RuvAB complex. HJ branch migration allows RuvC to scan DNA until it finds its consensus sequence, where it cleaves and resolves the cruciform DNA. In Lysinibacillus sphaericus (strain C3-41), this protein is Holliday junction branch migration complex subunit RuvA.